A 338-amino-acid polypeptide reads, in one-letter code: Anthranilate phosphoribosyltransferase (338 aa).

Residues glycine 78, 81 to 82, threonine 86, 88 to 91, 106 to 114, and serine 118 each bind 5-phospho-alpha-D-ribose 1-diphosphate; these read GD, NIST, and KHGNRSVSS. Glycine 78 lines the anthranilate pocket. Serine 90 is a binding site for Mg(2+). Residue asparagine 109 participates in anthranilate binding. Arginine 164 contacts anthranilate. Mg(2+) is bound by residues aspartate 223 and glutamate 224.

Belongs to the anthranilate phosphoribosyltransferase family. As to quaternary structure, homodimer. Requires Mg(2+) as cofactor.

It carries out the reaction N-(5-phospho-beta-D-ribosyl)anthranilate + diphosphate = 5-phospho-alpha-D-ribose 1-diphosphate + anthranilate. It participates in amino-acid biosynthesis; L-tryptophan biosynthesis; L-tryptophan from chorismate: step 2/5. In terms of biological role, catalyzes the transfer of the phosphoribosyl group of 5-phosphorylribose-1-pyrophosphate (PRPP) to anthranilate to yield N-(5'-phosphoribosyl)-anthranilate (PRA). This chain is Anthranilate phosphoribosyltransferase, found in Bacillus velezensis (strain DSM 23117 / BGSC 10A6 / LMG 26770 / FZB42) (Bacillus amyloliquefaciens subsp. plantarum).